Here is a 621-residue protein sequence, read N- to C-terminus: Interferon-induced GTP-binding protein Mx1 (621 aa).

The Dynamin-type G domain occupies 31–304; sequence DLALPAIAVI…LVHHIEKSLP (274 aa). A G1 motif region spans residues 41–48; it reads GDQSSGKS. Residue 41 to 48 participates in GTP binding; sequence GDQSSGKS. Positions 66-68 are G2 motif; the sequence is VTR. Residues 142-145 form a G3 motif region; sequence DLPG. Residues 142 to 146 and 211 to 214 each bind GTP; these read DLPGI and TKPD. The segment at 211–214 is G4 motif; sequence TKPD. Positions 243 to 246 are G5 motif; that stretch reads KCRG. A GED domain is found at 535–621; sequence LQEMMLHLKS…MKARSYLVEF (87 aa).

It belongs to the TRAFAC class dynamin-like GTPase superfamily. Dynamin/Fzo/YdjA family.

The protein resides in the cytoplasm. Its function is as follows. Does not inhibit strain RB-1 of the fish pathogen, infectious hematopoietic necrosis virus (IHNV). The polypeptide is Interferon-induced GTP-binding protein Mx1 (mx1) (Oncorhynchus mykiss (Rainbow trout)).